Consider the following 177-residue polypeptide: Large ribosomal subunit protein uL6 (177 aa).

The protein belongs to the universal ribosomal protein uL6 family. In terms of assembly, part of the 50S ribosomal subunit.

In terms of biological role, this protein binds to the 23S rRNA, and is important in its secondary structure. It is located near the subunit interface in the base of the L7/L12 stalk, and near the tRNA binding site of the peptidyltransferase center. The protein is Large ribosomal subunit protein uL6 of Mesorhizobium japonicum (strain LMG 29417 / CECT 9101 / MAFF 303099) (Mesorhizobium loti (strain MAFF 303099)).